A 118-amino-acid chain; its full sequence is IgW heavy chain V region W26 (118 aa).

The 109-residue stretch at 1-109 folds into the Ig-like domain; sequence NIVLTQPESA…PQWGYWGSGT (109 aa). A disulfide bond links C22 and C93.

Expressed mainly in lymphoid tissues including spleen, epigonal organ and circulating lymphocytes.

The sequence is that of IgW heavy chain V region W26 from Heterodontus francisci (Horn shark).